Here is a 349-residue protein sequence, read N- to C-terminus: Isopentenyl-diphosphate delta-isomerase (349 aa).

9-10 (RK) serves as a coordination point for substrate. FMN contacts are provided by residues 65–67 (AMT), S95, and N124. 95–97 (STH) is a binding site for substrate. Q154 is a substrate binding site. E155 contributes to the Mg(2+) binding site. Residues K186, S211, T216, 262 to 264 (GLR), and 283 to 284 (SR) each bind FMN.

It belongs to the IPP isomerase type 2 family. In terms of assembly, homooctamer. Dimer of tetramers. Requires FMN as cofactor. It depends on NADPH as a cofactor. Mg(2+) is required as a cofactor.

The protein localises to the cytoplasm. The catalysed reaction is isopentenyl diphosphate = dimethylallyl diphosphate. Its function is as follows. Involved in the biosynthesis of isoprenoids. Catalyzes the 1,3-allylic rearrangement of the homoallylic substrate isopentenyl (IPP) to its allylic isomer, dimethylallyl diphosphate (DMAPP). The polypeptide is Isopentenyl-diphosphate delta-isomerase (Staphylococcus aureus (strain USA300 / TCH1516)).